Reading from the N-terminus, the 1938-residue chain is Myosin-1 (1938 aa).

The disordered stretch occupies residues 1–27; that stretch reads MSLEHEKDPGWQYLKRSREQQLADQSR. Over residues 16-27 the composition is skewed to basic and acidic residues; that stretch reads RSREQQLADQSR. The region spanning 30–80 is the Myosin N-terminal SH3-like domain; it reads DSKKNVWIPDAEEGYIEGVIKGPGPKADTVIVTAGGKDVTLKKDIVQEVNP. Positions 84 to 785 constitute a Myosin motor domain; sequence EKTEDMSNLT…VVAHIEDLRD (702 aa). Residue K128 is modified to N6,N6,N6-trimethyllysine. 177–184 contacts ATP; sequence GESGAGKT. 2 actin-binding regions span residues 660–682 and 764–778; these read LNKL…IPNE and RIGH…GVVA. An alpha-helical tailpiece (short S2) region spans residues 846 to 1170; the sequence is QLKCGKMAEE…NKQLEIQQDN (325 aa). The segment at 846–1938 is rodlike tail (S2 and LMM domains); that stretch reads QLKCGKMAEE…GQVVRSATNK (1093 aa). A coiled-coil region spans residues 846–1938; it reads QLKCGKMAEE…GQVVRSATNK (1093 aa). The tract at residues 919-951 is disordered; it reads RQEVEKSLNDANDRLSEHEEKNADLEKQRRKAQ. Residues 920-951 show a composition bias toward basic and acidic residues; it reads QEVEKSLNDANDRLSEHEEKNADLEKQRRKAQ. The segment at 1171 to 1938 is light meromyosin (LMM); it reads NKKKDSEIIK…GQVVRSATNK (768 aa).

This sequence belongs to the TRAFAC class myosin-kinesin ATPase superfamily. Myosin family. In terms of assembly, muscle myosin is a hexameric protein that consists of 2 heavy chain subunits (MHC), 2 alkali light chain subunits (MLC) and 2 regulatory light chain subunits (MLC-2). Interacts with itr-1 (via c-terminal coiled coil domain). In terms of tissue distribution, found exclusively in the pharyngeal muscle.

Its subcellular location is the cytoplasm. The protein localises to the myofibril. Functionally, muscle contraction. The chain is Myosin-1 from Caenorhabditis elegans.